The sequence spans 405 residues: Type II secretion system protein F (405 aa).

The Cytoplasmic segment spans residues 1 to 169; it reads MPLYRYKALD…SRALKGKVIN (169 aa). 3 residues coordinate Ca(2+): Asp98, Gln151, and Asp155. Residues 170 to 190 form a helical membrane-spanning segment; the sequence is ALIYPAILLAVVGCALLFLLG. Residues 191 to 218 are Periplasmic-facing; sequence YVVPQFAQMYESLDVALPWFTQAVLSVG. Residues 219 to 239 traverse the membrane as a helical segment; it reads LLVRDWWLVLVVIPGVLGLWL. Residues 240–370 lie on the Cytoplasmic side of the membrane; sequence DRKRRNAAFR…LETAQAIDRA (131 aa). The helical transmembrane segment at 371 to 391 threads the bilayer; sequence LAALVPLITLVLASVVGLVII. The Periplasmic segment spans residues 392 to 405; that stretch reads SVLVPLYDLTNAIG.

It belongs to the GSP F family. As to quaternary structure, type II secretion system is composed of four main components: the outer membrane complex, the inner membrane complex, the cytoplasmic secretion ATPase and the periplasm-spanning pseudopilus. Homodimer. Interacts with XpsE and XpsL components.

The protein localises to the cell inner membrane. Its function is as follows. Component of the type II secretion system inner membrane complex required for the energy-dependent secretion of extracellular factors such as proteases and toxins from the periplasm. This is Type II secretion system protein F (xpsF) from Xanthomonas campestris pv. campestris (strain ATCC 33913 / DSM 3586 / NCPPB 528 / LMG 568 / P 25).